Consider the following 955-residue polypeptide: 2-oxoglutarate dehydrogenase E1 component (955 aa).

Belongs to the alpha-ketoglutarate dehydrogenase family. Homodimer. Part of the 2-oxoglutarate dehydrogenase (OGDH) complex composed of E1 (2-oxoglutarate dehydrogenase), E2 (dihydrolipoamide succinyltransferase) and E3 (dihydrolipoamide dehydrogenase); the complex contains multiple copies of the three enzymatic components (E1, E2 and E3). Thiamine diphosphate serves as cofactor.

It carries out the reaction N(6)-[(R)-lipoyl]-L-lysyl-[protein] + 2-oxoglutarate + H(+) = N(6)-[(R)-S(8)-succinyldihydrolipoyl]-L-lysyl-[protein] + CO2. Functionally, E1 component of the 2-oxoglutarate dehydrogenase (OGDH) complex which catalyzes the decarboxylation of 2-oxoglutarate, the first step in the conversion of 2-oxoglutarate to succinyl-CoA and CO(2). The protein is 2-oxoglutarate dehydrogenase E1 component of Bacillus cereus (strain 03BB102).